Reading from the N-terminus, the 176-residue chain is Inner membrane-spanning protein YciB (176 aa).

Transmembrane regions (helical) follow at residues 24-44, 49-69, 76-96, 119-139, and 149-169; these read TATA…AFRH, PMLW…LVLH, WKPT…QLAF, LSVV…FVAY, and FKLF…SLWL.

This sequence belongs to the YciB family.

The protein localises to the cell inner membrane. Functionally, plays a role in cell envelope biogenesis, maintenance of cell envelope integrity and membrane homeostasis. The chain is Inner membrane-spanning protein YciB from Paraburkholderia phytofirmans (strain DSM 17436 / LMG 22146 / PsJN) (Burkholderia phytofirmans).